We begin with the raw amino-acid sequence, 257 residues long: Acyl-[acyl-carrier-protein]--UDP-N-acetylglucosamine O-acyltransferase (257 aa).

Belongs to the transferase hexapeptide repeat family. LpxA subfamily. In terms of assembly, homotrimer.

Its subcellular location is the cytoplasm. It carries out the reaction a (3R)-hydroxyacyl-[ACP] + UDP-N-acetyl-alpha-D-glucosamine = a UDP-3-O-[(3R)-3-hydroxyacyl]-N-acetyl-alpha-D-glucosamine + holo-[ACP]. Its pathway is glycolipid biosynthesis; lipid IV(A) biosynthesis; lipid IV(A) from (3R)-3-hydroxytetradecanoyl-[acyl-carrier-protein] and UDP-N-acetyl-alpha-D-glucosamine: step 1/6. In terms of biological role, involved in the biosynthesis of lipid A, a phosphorylated glycolipid that anchors the lipopolysaccharide to the outer membrane of the cell. This Fusobacterium nucleatum subsp. nucleatum (strain ATCC 25586 / DSM 15643 / BCRC 10681 / CIP 101130 / JCM 8532 / KCTC 2640 / LMG 13131 / VPI 4355) protein is Acyl-[acyl-carrier-protein]--UDP-N-acetylglucosamine O-acyltransferase.